Reading from the N-terminus, the 467-residue chain is ATP synthase subunit beta (467 aa).

ATP is bound at residue glycine 152–threonine 159.

The protein belongs to the ATPase alpha/beta chains family. As to quaternary structure, F-type ATPases have 2 components, CF(1) - the catalytic core - and CF(0) - the membrane proton channel. CF(1) has five subunits: alpha(3), beta(3), gamma(1), delta(1), epsilon(1). CF(0) has three main subunits: a(1), b(2) and c(9-12). The alpha and beta chains form an alternating ring which encloses part of the gamma chain. CF(1) is attached to CF(0) by a central stalk formed by the gamma and epsilon chains, while a peripheral stalk is formed by the delta and b chains.

Its subcellular location is the cell membrane. It carries out the reaction ATP + H2O + 4 H(+)(in) = ADP + phosphate + 5 H(+)(out). Produces ATP from ADP in the presence of a proton gradient across the membrane. The catalytic sites are hosted primarily by the beta subunits. The chain is ATP synthase subunit beta from Caldicellulosiruptor saccharolyticus (strain ATCC 43494 / DSM 8903 / Tp8T 6331).